We begin with the raw amino-acid sequence, 835 residues long: MPPRAPRPAGAVSPPFPPLAGPPLKARAPRARDSPLTSPCRAHAAMASVVAPAASSSAAAPGADAFLDAACPEDVARALAAELEALRALGHDVGAPAPGASRREAALFITRAVDGLKAFSRVDERVYVACGKLVHLRVRSREADLDAWLASPELALIPAVAAAVRRHRARVEAALRWFWREAYPALYARGLQSALKYEEMYLARLEHGRCEAMDQFFVRLAAAAATATRRPMALVLCGSDAWPEVFDAYFRALATQAIVPATPLMLFAGRARGSLASCYLLNPLPRTTEEAVRAITDEVAPILLRRGGVGLSLQSFNRTPSGDCTRGIMAVLKALDSMTAAINSDSERPTGVCVYVEPWHADVRAVLNMRGMLAADESLRCDNIFSCLWTPDLFFQRYQRHLDGERAVKWTLFDDRASHLASLHGPDFAREYERLERLGLGVESLPIQDMAFLIVRSAVMTGSPFLMMKDACNRHFHTDTRGAALATSNLCTEIVQRATPGENGVCNLASVNLPACLAGGAFDFAALRRAARVAAVFVNAMMRIGNYPTGASVEGVRRSRSLGIGLQGLHTTVLALDMDMADPAARRLNAAIAEELLYGVMDASVELCERGLRPFDGFEHSRYARGVMPFDAYERVSLREPMRWDALRVRIAEHGVYNAQFVALMPTVSSSQVTESSEGFSPTFTNMFSKVTISGELLRPNLPLMETLRRLFPRECARRDAVARLERAQWSVAAAFGELPAGHPLAKFKTAFEYDQELLIDMCADRAPFVDHSQSMSLFLTEPADGKLHASRVMGLLMRAYNLGLKTGMYYCKIRKATNNGVFTGGDLVCTSCHL.

The segment at 1-39 (MPPRAPRPAGAVSPPFPPLAGPPLKARAPRARDSPLTSP) is disordered. Residues Thr262, 277–278 (SC), Gly308, 489–493 (NLCTE), and 666–670 (PTVSS) each bind substrate. The cysteines at positions 278 and 506 are disulfide-linked. Asn489 functions as the Proton acceptor in the catalytic mechanism. Cys491 serves as the catalytic Cysteine radical intermediate. Glu493 (proton acceptor) is an active-site residue.

This sequence belongs to the ribonucleoside diphosphate reductase large chain family. As to quaternary structure, heterotetramer composed of a homodimer of the large subunit (R1) and a homodimer of the small subunit (R2). Larger multisubunit protein complex are also active, composed of (R1)n(R2)n.

It catalyses the reaction a 2'-deoxyribonucleoside 5'-diphosphate + [thioredoxin]-disulfide + H2O = a ribonucleoside 5'-diphosphate + [thioredoxin]-dithiol. Its function is as follows. Ribonucleoside-diphosphate reductase holoenzyme provides the precursors necessary for viral DNA synthesis. Allows virus growth in non-dividing cells, as well as reactivation from latency in infected hosts. Catalyzes the biosynthesis of deoxyribonucleotides from the corresponding ribonucleotides. In Suid herpesvirus 1 (strain Kaplan) (SuHV-1), this protein is Ribonucleoside-diphosphate reductase large subunit.